The chain runs to 302 residues: Polyadenylate-binding protein 2 (302 aa).

Low complexity predominate over residues 1–12 (MAAAAAAAAAAG). Positions 1–111 (MAAAAAAAAA…EADPGDGAIE (111 aa)) are disordered. Ala-2 carries the N-acetylalanine modification. Residues 2-141 (AAAAAAAAAA…LKELQNEVEK (140 aa)) form an interaction with SKIP region. Arg-17 is subject to Omega-N-methylarginine. Ser-19 is modified (phosphoserine). Residues 30–47 (GAGGEAGEGDPGGAGDYG) are compositionally biased toward gly residues. The span at 51–68 (ESEELEPGELLPEPEPEE) shows a compositional bias: acidic residues. Position 52 is a phosphoserine (Ser-52). A compositionally biased stretch (pro residues) spans 73–83 (PRAPPGAPGPG). Ser-91 carries the post-translational modification Phosphoserine. Residues 111-147 (EDPELEAIKARVREMEEEAEKLKELQNEVEKQMNMSP) are a coiled coil. The segment at 115–143 (LEAIKARVREMEEEAEKLKELQNEVEKQM) is stimulates PAPOLA. Ser-146 and Ser-231 each carry phosphoserine. Residues 168–245 (RSIYVGNVDY…RQIKVIPKRT (78 aa)) form the RRM domain. Arg-234, Arg-255, and Arg-259 each carry asymmetric dimethylarginine; alternate. Omega-N-methylarginine; alternate occurs at positions 234, 255, and 259. Residues 255–302 (RGFPRSRYRARTTNYNSSRSRFYSGFNSRPRGRIYRGRARATSWYSPY) form a strong poly(A) affinity and self-association region. Asymmetric dimethylarginine is present on residues Arg-261, Arg-263, Arg-265, Arg-273, Arg-275, Arg-283, Arg-285, Arg-287, Arg-290, Arg-292, and Arg-294. The segment at 282-302 (SRPRGRIYRGRARATSWYSPY) is interaction with PAPOLA.

Monomer and homooligomer. Identified in a IGF2BP1-dependent mRNP granule complex containing untranslated mRNAs. Binds RNA as a monomer and oligomerizes when bound to poly(A). Interacts with PAPOLA, but only in presence of oligo(A) RNA. Interacts with NUDT21/CPSF5 and transportin. Associates in a ternary complex with CPSF4 and NS/NS1 and interaction with NS/NS1, blocks nuclear export of host cell mRNAs. Associates in a single complex with SKIP and MYOD1 and interacts with SKIP in differentiated myocytes. May interact with SETX. Interacts (via RRM domain and C-terminal arginine-rich region) with ZFP36 (via hypophosphorylated form); this interaction occurs in the nucleus in a RNA-independent manner, decreases in presence of single-stranded poly(A) RNA-oligomer and in a p38-dependent-manner and may down-regulated RNA poly(A) polymerase activity. Component of the poly(A) tail exosome targeting (PAXT) complex composed of PABPN1, ZFC3H1 and MTREX. Interacts with ZFC3H1 in a RNase-insensitive manner. Interacts with FRG1. Interacts with ZC3H11A. In terms of processing, arginine dimethylation is asymmetric and involves PRMT1 and PRMT3. It does not influence the RNA binding properties. In terms of tissue distribution, ubiquitous.

It localises to the cytoplasm. Its subcellular location is the nucleus. The protein resides in the nucleus speckle. Functionally, involved in the 3'-end formation of mRNA precursors (pre-mRNA) by the addition of a poly(A) tail of 200-250 nt to the upstream cleavage product. Stimulates poly(A) polymerase (PAPOLA) conferring processivity on the poly(A) tail elongation reaction and also controls the poly(A) tail length. Increases the affinity of poly(A) polymerase for RNA. Is also present at various stages of mRNA metabolism including nucleocytoplasmic trafficking and nonsense-mediated decay (NMD) of mRNA. Cooperates with SKIP to synergistically activate E-box-mediated transcription through MYOD1 and may regulate the expression of muscle-specific genes. Binds to poly(A) and to poly(G) with high affinity. May protect the poly(A) tail from degradation. Subunit of the trimeric poly(A) tail exosome targeting (PAXT) complex, a complex that directs a subset of long and polyadenylated poly(A) RNAs for exosomal degradation. The RNA exosome is fundamental for the degradation of RNA in eukaryotic nuclei. Substrate targeting is facilitated by its cofactor MTREX, which links to RNA-binding protein adapters. In Mus musculus (Mouse), this protein is Polyadenylate-binding protein 2 (Pabpn1).